We begin with the raw amino-acid sequence, 208 residues long: High frequency lysogenization protein HflD homolog (208 aa).

Residues 91 to 125 (LMVLERKLNANKQAMNQLGERLGQLERQLAHFDLE) are a coiled coil.

This sequence belongs to the HflD family.

The protein resides in the cytoplasm. It is found in the cell inner membrane. The polypeptide is High frequency lysogenization protein HflD homolog (Serratia proteamaculans (strain 568)).